The primary structure comprises 587 residues: Aspartate--tRNA ligase (587 aa).

Glu-174 is an L-aspartate binding site. An aspartate region spans residues 198–201 (QITK). L-aspartate is bound at residue Arg-220. Residues 220 to 222 (RDE) and Gln-229 contribute to the ATP site. Residue His-443 participates in L-aspartate binding. Glu-477 contributes to the ATP binding site. Position 484 (Arg-484) interacts with L-aspartate. Position 529–532 (529–532 (GLDR)) interacts with ATP.

This sequence belongs to the class-II aminoacyl-tRNA synthetase family. Type 1 subfamily. Homodimer.

It localises to the cytoplasm. The enzyme catalyses tRNA(Asp) + L-aspartate + ATP = L-aspartyl-tRNA(Asp) + AMP + diphosphate. Its function is as follows. Catalyzes the attachment of L-aspartate to tRNA(Asp) in a two-step reaction: L-aspartate is first activated by ATP to form Asp-AMP and then transferred to the acceptor end of tRNA(Asp). The polypeptide is Aspartate--tRNA ligase (Streptococcus pneumoniae serotype 2 (strain D39 / NCTC 7466)).